The following is a 117-amino-acid chain: Immunoglobulin heavy variable 5-51 (117 aa).

The first 19 residues, methionine 1–alanine 19, serve as a signal peptide directing secretion. The interval glutamate 20–serine 44 is framework-1. Positions glutamate 20–arginine 117 constitute an Ig-like domain. The cysteines at positions 41 and 115 are disulfide-linked. Positions glycine 45–tryptophan 52 are complementarity-determining-1. The interval isoleucine 53–isoleucine 69 is framework-2. Residues isoleucine 70 to threonine 77 are complementarity-determining-2. The interval arginine 78 to cysteine 115 is framework-3. Positions alanine 116 to arginine 117 are complementarity-determining-3.

Immunoglobulins are composed of two identical heavy chains and two identical light chains; disulfide-linked.

The protein localises to the secreted. It is found in the cell membrane. In terms of biological role, v region of the variable domain of immunoglobulin heavy chains that participates in the antigen recognition. Immunoglobulins, also known as antibodies, are membrane-bound or secreted glycoproteins produced by B lymphocytes. In the recognition phase of humoral immunity, the membrane-bound immunoglobulins serve as receptors which, upon binding of a specific antigen, trigger the clonal expansion and differentiation of B lymphocytes into immunoglobulins-secreting plasma cells. Secreted immunoglobulins mediate the effector phase of humoral immunity, which results in the elimination of bound antigens. The antigen binding site is formed by the variable domain of one heavy chain, together with that of its associated light chain. Thus, each immunoglobulin has two antigen binding sites with remarkable affinity for a particular antigen. The variable domains are assembled by a process called V-(D)-J rearrangement and can then be subjected to somatic hypermutations which, after exposure to antigen and selection, allow affinity maturation for a particular antigen. This is Immunoglobulin heavy variable 5-51 from Homo sapiens (Human).